Reading from the N-terminus, the 602-residue chain is MNKVVGIDLGTTNSVVAAIEGGQPTVITNAEGFRTTPSIVAYTKKQELLVGQLAKRQSVVNAENTFFSVKRFIGCKADEISEESKELPYKVIKDSNGNIKIKCSSLNKDFSPEEISAQVIRKLIADAKEYLGQDVTKAVITVPAYFNDSQRQATVDAGKIAGIEVLRIINEPTAASLAYGLDKKQNETILVFDLGGGTFDVSILEVGDGIFEVLSTAGDTNLGGDDFDKALVRWLVEDFEAKEGTNLTKDIQALQRLTEAAEKAKMELSNVEKTTINLPFITADKNGPKHIQQELTREKFESLCQDLINRCRIPVEKALKDAKLDQSGINEVVLVGGSTRIPAIQQLVESLTGKKPNKSVNPDEVVAIGAAIQAGILAGEITDILLLDVTPLSLGVETVGGIMTKLISRNTTIPVKKSELFSTAADNQTNVEIHVLQGEREVVSGNKSLGNFKLEGIPQAPKGKPQIEVTFDINVDGILSVTAKENESGKEQNVTIQGASNLSESEVNDMLEEAEKYAVIDKEQKEKSEMVVSATAYCDEVEKKLNSGEMGECTTEEEEEIKNVIKTLREALSSANYASIKESFEQLRTLTEVHLNSTNPAN.

The protein belongs to the heat shock protein 70 family.

It localises to the plastid. The protein resides in the chloroplast. Functionally, acts as a chaperone. This Thalassiosira pseudonana (Marine diatom) protein is Chaperone protein dnaK.